A 760-amino-acid polypeptide reads, in one-letter code: Endoplasmin homolog (760 aa).

The first 23 residues, 1-23, serve as a signal peptide directing secretion; the sequence is MRFLLVGFVALLAVSAFIPNVYA. Residues asparagine 95, aspartate 137, asparagine 150, and phenylalanine 187 each coordinate ATP. Asparagine 95 is a glycosylation site (N-linked (GlcNAc...) asparagine). The N-linked (GlcNAc...) asparagine glycan is linked to asparagine 423. The tract at residues 727–760 is disordered; sequence SQDAQVETEQHIEEAEPEPEAAEETTIEEEHSEL. A compositionally biased stretch (acidic residues) spans 741–760; sequence AEPEPEAAEETTIEEEHSEL. A Prevents secretion from ER motif is present at residues 757–760; that stretch reads HSEL.

It belongs to the heat shock protein 90 family.

Its subcellular location is the endoplasmic reticulum lumen. In terms of biological role, molecular chaperone that functions in the processing and transport of secreted proteins. This Caenorhabditis elegans protein is Endoplasmin homolog.